Here is a 494-residue protein sequence, read N- to C-terminus: Probable cytosol aminopeptidase (494 aa).

Positions 260 and 265 each coordinate Mn(2+). Lys272 is a catalytic residue. Mn(2+)-binding residues include Asp283, Asp342, and Glu344. Residue Arg346 is part of the active site.

It belongs to the peptidase M17 family. Mn(2+) serves as cofactor.

The protein resides in the cytoplasm. The catalysed reaction is Release of an N-terminal amino acid, Xaa-|-Yaa-, in which Xaa is preferably Leu, but may be other amino acids including Pro although not Arg or Lys, and Yaa may be Pro. Amino acid amides and methyl esters are also readily hydrolyzed, but rates on arylamides are exceedingly low.. It carries out the reaction Release of an N-terminal amino acid, preferentially leucine, but not glutamic or aspartic acids.. In terms of biological role, presumably involved in the processing and regular turnover of intracellular proteins. Catalyzes the removal of unsubstituted N-terminal amino acids from various peptides. The sequence is that of Probable cytosol aminopeptidase from Bacillus cereus (strain ZK / E33L).